The sequence spans 339 residues: tRNA(Ile)-lysidine synthase (339 aa).

34-39 contacts ATP; that stretch reads SGGPDS.

Belongs to the tRNA(Ile)-lysidine synthase family.

It localises to the cytoplasm. It carries out the reaction cytidine(34) in tRNA(Ile2) + L-lysine + ATP = lysidine(34) in tRNA(Ile2) + AMP + diphosphate + H(+). Its function is as follows. Ligates lysine onto the cytidine present at position 34 of the AUA codon-specific tRNA(Ile) that contains the anticodon CAU, in an ATP-dependent manner. Cytidine is converted to lysidine, thus changing the amino acid specificity of the tRNA from methionine to isoleucine. The chain is tRNA(Ile)-lysidine synthase from Methylobacterium nodulans (strain LMG 21967 / CNCM I-2342 / ORS 2060).